The primary structure comprises 123 residues: Small ribosomal subunit protein uS12cz/uS12cy (123 aa).

It belongs to the universal ribosomal protein uS12 family. In terms of assembly, part of the 30S ribosomal subunit.

The protein resides in the plastid. Its subcellular location is the chloroplast. With S4 and S5 plays an important role in translational accuracy. Located at the interface of the 30S and 50S subunits. This chain is Small ribosomal subunit protein uS12cz/uS12cy (rps12-A), found in Daucus carota (Wild carrot).